Reading from the N-terminus, the 257-residue chain is Pyridoxine 5'-phosphate synthase (257 aa).

Asparagine 6 provides a ligand contact to 3-amino-2-oxopropyl phosphate. Residue 8 to 9 (DH) coordinates 1-deoxy-D-xylulose 5-phosphate. Arginine 17 provides a ligand contact to 3-amino-2-oxopropyl phosphate. The active-site Proton acceptor is histidine 41. 1-deoxy-D-xylulose 5-phosphate-binding residues include arginine 43 and histidine 48. Glutamate 68 serves as the catalytic Proton acceptor. Threonine 98 is a 1-deoxy-D-xylulose 5-phosphate binding site. The active-site Proton donor is the histidine 210. 3-amino-2-oxopropyl phosphate is bound by residues glycine 211 and 232–233 (GQ).

The protein belongs to the PNP synthase family. As to quaternary structure, homooctamer; tetramer of dimers.

The protein resides in the cytoplasm. The enzyme catalyses 3-amino-2-oxopropyl phosphate + 1-deoxy-D-xylulose 5-phosphate = pyridoxine 5'-phosphate + phosphate + 2 H2O + H(+). Its pathway is cofactor biosynthesis; pyridoxine 5'-phosphate biosynthesis; pyridoxine 5'-phosphate from D-erythrose 4-phosphate: step 5/5. In terms of biological role, catalyzes the complicated ring closure reaction between the two acyclic compounds 1-deoxy-D-xylulose-5-phosphate (DXP) and 3-amino-2-oxopropyl phosphate (1-amino-acetone-3-phosphate or AAP) to form pyridoxine 5'-phosphate (PNP) and inorganic phosphate. In Campylobacter jejuni subsp. jejuni serotype O:2 (strain ATCC 700819 / NCTC 11168), this protein is Pyridoxine 5'-phosphate synthase.